A 103-amino-acid polypeptide reads, in one-letter code: uncharacterized protein (103 aa).

Transmembrane regions (helical) follow at residues 1–21 (MPGV…VFLS), 29–49 (IAFI…TGYF), and 69–89 (VVEW…GLLF).

Its subcellular location is the cell membrane. This is an uncharacterized protein from Methanocaldococcus jannaschii (strain ATCC 43067 / DSM 2661 / JAL-1 / JCM 10045 / NBRC 100440) (Methanococcus jannaschii).